The primary structure comprises 425 residues: Histidine--tRNA ligase (425 aa).

It belongs to the class-II aminoacyl-tRNA synthetase family. Homodimer.

Its subcellular location is the cytoplasm. The enzyme catalyses tRNA(His) + L-histidine + ATP = L-histidyl-tRNA(His) + AMP + diphosphate + H(+). The chain is Histidine--tRNA ligase from Histophilus somni (strain 129Pt) (Haemophilus somnus).